Reading from the N-terminus, the 536-residue chain is Apoptosis inhibitor 5 homolog (536 aa).

The segment at 462–536 is disordered; the sequence is ITFGEKAAAN…GYRNRRFNKY (75 aa). Positions 472–487 are enriched in basic and acidic residues; the sequence is GKDKDQEPEKKSRPSN. A compositionally biased stretch (polar residues) spans 498–507; that stretch reads KYSNKVNQSY. A compositionally biased stretch (gly residues) spans 516–528; the sequence is RGGGGGGGSGGGY.

This sequence belongs to the API5 family.

The protein resides in the nucleus. Functionally, antiapoptotic factor. Also known to efficiently suppress E2F1-induced apoptosis. The protein is Apoptosis inhibitor 5 homolog of Drosophila melanogaster (Fruit fly).